Reading from the N-terminus, the 776-residue chain is Lon protease (776 aa).

The Lon N-terminal domain maps to 12–209 (LPIIALRGLW…LVYKFVIKEI (198 aa)). Position 360 to 367 (360 to 367 (GPPGVGKT)) interacts with ATP. The Lon proteolytic domain maps to 596 to 776 (EDTVGVVNGL…VKEILDEVLI (181 aa)). Catalysis depends on residues serine 683 and lysine 726.

The protein belongs to the peptidase S16 family. Homohexamer. Organized in a ring with a central cavity.

The protein resides in the cytoplasm. The enzyme catalyses Hydrolysis of proteins in presence of ATP.. Its function is as follows. ATP-dependent serine protease that mediates the selective degradation of mutant and abnormal proteins as well as certain short-lived regulatory proteins. Required for cellular homeostasis and for survival from DNA damage and developmental changes induced by stress. Degrades polypeptides processively to yield small peptide fragments that are 5 to 10 amino acids long. Binds to DNA in a double-stranded, site-specific manner. The polypeptide is Lon protease (Finegoldia magna (strain ATCC 29328 / DSM 20472 / WAL 2508) (Peptostreptococcus magnus)).